The chain runs to 482 residues: ATP synthase subunit beta (482 aa).

168 to 175 (GGAGVGKT) contacts ATP.

The protein belongs to the ATPase alpha/beta chains family. As to quaternary structure, F-type ATPases have 2 components, CF(1) - the catalytic core - and CF(0) - the membrane proton channel. CF(1) has five subunits: alpha(3), beta(3), gamma(1), delta(1), epsilon(1). CF(0) has three main subunits: a(1), b(2) and c(9-12). The alpha and beta chains form an alternating ring which encloses part of the gamma chain. CF(1) is attached to CF(0) by a central stalk formed by the gamma and epsilon chains, while a peripheral stalk is formed by the delta and b chains.

It is found in the cell membrane. The catalysed reaction is ATP + H2O + 4 H(+)(in) = ADP + phosphate + 5 H(+)(out). Produces ATP from ADP in the presence of a proton gradient across the membrane. The catalytic sites are hosted primarily by the beta subunits. This chain is ATP synthase subunit beta, found in Nocardia farcinica (strain IFM 10152).